Here is a 258-residue protein sequence, read N- to C-terminus: Imidazole glycerol phosphate synthase subunit HisF (258 aa).

Active-site residues include Asp-11 and Asp-130.

The protein belongs to the HisA/HisF family. As to quaternary structure, heterodimer of HisH and HisF.

It localises to the cytoplasm. It catalyses the reaction 5-[(5-phospho-1-deoxy-D-ribulos-1-ylimino)methylamino]-1-(5-phospho-beta-D-ribosyl)imidazole-4-carboxamide + L-glutamine = D-erythro-1-(imidazol-4-yl)glycerol 3-phosphate + 5-amino-1-(5-phospho-beta-D-ribosyl)imidazole-4-carboxamide + L-glutamate + H(+). It functions in the pathway amino-acid biosynthesis; L-histidine biosynthesis; L-histidine from 5-phospho-alpha-D-ribose 1-diphosphate: step 5/9. Its function is as follows. IGPS catalyzes the conversion of PRFAR and glutamine to IGP, AICAR and glutamate. The HisF subunit catalyzes the cyclization activity that produces IGP and AICAR from PRFAR using the ammonia provided by the HisH subunit. This is Imidazole glycerol phosphate synthase subunit HisF from Yersinia pseudotuberculosis serotype O:1b (strain IP 31758).